The following is a 444-amino-acid chain: Phosphoglucosamine mutase (444 aa).

Ser-102 acts as the Phosphoserine intermediate in catalysis. Residues Ser-102, Asp-241, Asp-243, and Asp-245 each contribute to the Mg(2+) site. At Ser-102 the chain carries Phosphoserine.

Belongs to the phosphohexose mutase family. It depends on Mg(2+) as a cofactor. Post-translationally, activated by phosphorylation.

It catalyses the reaction alpha-D-glucosamine 1-phosphate = D-glucosamine 6-phosphate. Its function is as follows. Catalyzes the conversion of glucosamine-6-phosphate to glucosamine-1-phosphate. This is Phosphoglucosamine mutase from Acidovorax ebreus (strain TPSY) (Diaphorobacter sp. (strain TPSY)).